A 363-amino-acid polypeptide reads, in one-letter code: Pyrimidine monooxygenase RutA (363 aa).

Residues 49-50 (IK), N115, E124, 140-141 (RY), and S190 contribute to the FMN site.

This sequence belongs to the NtaA/SnaA/DszA monooxygenase family. RutA subfamily.

It catalyses the reaction uracil + FMNH2 + NADH + O2 = (Z)-3-ureidoacrylate + FMN + NAD(+) + H2O + H(+). The enzyme catalyses thymine + FMNH2 + NADH + O2 = (Z)-2-methylureidoacrylate + FMN + NAD(+) + H2O + H(+). Its function is as follows. Catalyzes the pyrimidine ring opening between N-3 and C-4 by an unusual flavin hydroperoxide-catalyzed mechanism, adding oxygen atoms in the process to yield ureidoacrylate peracid, that immediately reacts with FMN forming ureidoacrylate and FMN-N(5)-oxide. The FMN-N(5)-oxide reacts spontaneously with NADH to produce FMN. Requires the flavin reductase RutF to regenerate FMN in vivo. The sequence is that of Pyrimidine monooxygenase RutA from Escherichia coli O157:H7 (strain EC4115 / EHEC).